A 446-amino-acid chain; its full sequence is Calcium-binding and coiled-coil domain-containing protein 2 (446 aa).

Residues 133–136 (ILVV) carry the CLIR motif. Residues 137–349 (TTQGEVEEIE…RENSRLLSYM (213 aa)) are a coiled coil. The LIR-like motif lies at 203–206 (DYWE). The segment at 371–381 (NPGLVYGNPYS) is interaction with LGALS8. The interval 395–446 (KKCPICKADDICDHILEQQQMQPLCLNCPICDKIFPATEKQIFEDHVFCHSL) is interaction with MYO6. A UBZ1-type zinc finger spans residues 419–444 (CLNCPICDKIFPATEKQIFEDHVFCH). C422, C425, H440, and H444 together coordinate Zn(2+). The residue at position 445 (S445) is a Phosphoserine.

Belongs to the CALCOCO family. As to quaternary structure, dimer. Part of a complex consisting of CALCOCO2, TAX1BP1 and MYO6. Interacts with MYO6. Interacts with GEMIN4. Interacts with ATG8 family members MAP1LC3A, MAP1LC3B, GABARAP, GABARAPL1 and GABARAPL2. Interacts with ATG8 family member MAP1LC3C. Interacts with LGALS8. Interacts with TOM1; the interaction is indirect and is mediated by MYO6, which acts as a bridge between TOM1 and CALCOCO2. Interacts with AZI2.

It is found in the cytoplasm. The protein localises to the perinuclear region. It localises to the cytoskeleton. The protein resides in the cytoplasmic vesicle. Its subcellular location is the autophagosome membrane. Xenophagy-specific receptor required for autophagy-mediated intracellular bacteria degradation. Acts as an effector protein of galectin-sensed membrane damage that restricts the proliferation of infecting pathogens upon entry into the cytosol by targeting LGALS8-associated bacteria for autophagy. Initially orchestrates bacteria targeting to autophagosomes and subsequently ensures pathogen degradation by regulating pathogen-containing autophagosome maturation. Bacteria targeting to autophagosomes relies on its interaction with MAP1LC3A, MAP1LC3B and/or GABARAPL2, whereas regulation of pathogen-containing autophagosome maturation requires the interaction with MAP3LC3C. May play a role in ruffle formation and actin cytoskeleton organization and seems to negatively regulate constitutive secretion. This chain is Calcium-binding and coiled-coil domain-containing protein 2, found in Pongo abelii (Sumatran orangutan).